A 396-amino-acid chain; its full sequence is Pinosylvin synthase 2 (396 aa).

60 to 63 (KFKR) contributes to the substrate binding site. Residue Cys-170 is part of the active site. Residues Leu-273 and 311-313 (GGR) each bind substrate.

The protein belongs to the thiolase-like superfamily. Chalcone/stilbene synthases family. Homodimer.

The protein localises to the cytoplasm. The catalysed reaction is (E)-cinnamoyl-CoA + 3 malonyl-CoA + 3 H(+) = (E)-pinosylvin + 4 CO2 + 4 CoA. The enzyme catalyses 3-phenylpropanoyl-CoA + 3 malonyl-CoA + 3 H(+) = dihydropinosylvin + 4 CO2 + 4 CoA. It participates in phytoalexin biosynthesis; pinosylvin biosynthesis. In terms of biological role, catalyzes the production of pinosylvin from cinnamoyl-CoA and malonyl-CoA, and dihydropinosylvin from dihydrocinnamoyl-CoA. This is Pinosylvin synthase 2 from Pinus strobus (Eastern white pine).